The primary structure comprises 249 residues: V-type proton ATPase subunit D 2 (249 aa).

The protein belongs to the V-ATPase D subunit family. As to quaternary structure, V-ATPase is a heteromultimeric enzyme made up of two complexes: the ATP-hydrolytic V1 complex and the proton translocation V0 complex. The V1 complex consists of three catalytic AB heterodimers that form a heterohexamer, three peripheral stalks each consisting of EG heterodimers, one central rotor including subunits D and F, and the regulatory subunits C and H. The proton translocation complex V0 consists of the proton transport subunit a, a ring of proteolipid subunits c9c'', rotary subunit d, subunits e and f, and the accessory subunits VhaAC45 and ATP6AP2.

In terms of biological role, subunit of the V1 complex of vacuolar(H+)-ATPase (V-ATPase), a multisubunit enzyme composed of a peripheral complex (V1) that hydrolyzes ATP and a membrane integral complex (V0) that translocates protons. V-ATPase is responsible for acidifying and maintaining the pH of intracellular compartments and in some cell types, is targeted to the plasma membrane, where it is responsible for acidifying the extracellular environment. This Drosophila melanogaster (Fruit fly) protein is V-type proton ATPase subunit D 2 (Vha36-3).